The following is a 468-amino-acid chain: Anthocyanidin 3-O-glucoside 2'''-O-xylosyltransferase (468 aa).

Residues Ser-284, 344–346 (IQQ), 361–369 (HCGFGSMWE), and 383–386 (HGEQ) each bind UDP-alpha-D-xylose.

Belongs to the UDP-glycosyltransferase family.

The enzyme catalyses an anthocyanidin 3-O-beta-D-glucoside + UDP-alpha-D-xylose = an anthocyanidin 3-O-beta-D-sambubioside + UDP + 2 H(+). It participates in secondary metabolite biosynthesis; flavonoid biosynthesis. Functionally, contributes to the last few anthocyanin biosynthetic steps. Converts cyanidin 3-O-glucoside to cyanidin 3-O-xylosyl(1-&gt;2)glucoside. Can use 3-O-glucosylated anthocyanidins/flavonols and uridine diphosphate (UDP)-xylose as substrates. The protein is Anthocyanidin 3-O-glucoside 2'''-O-xylosyltransferase (A3G2XYLT) of Arabidopsis thaliana (Mouse-ear cress).